A 381-amino-acid chain; its full sequence is Guanine nucleotide-binding protein G(s) subunit alpha (381 aa).

The S-palmitoyl cysteine moiety is linked to residue C3. In terms of domain architecture, G-alpha spans 36 to 381 (ALHRLLLLGA…RMHLQKYELL (346 aa)). Positions 39-52 (RLLLLGAGESGKST) are G1 motif. GTP is bound by residues 44 to 51 (GAGESGKS), 183 to 189 (LRCRVLT), 208 to 212 (GVGGQ), 277 to 280 (NKQD), and A353. Residues S51 and T189 each coordinate Mg(2+). Positions 181 to 189 (DILRCRVLT) are G2 motif. A G3 motif region spans residues 204 to 213 (FYMFGVGGQR). The segment at 273-280 (ILFLNKQD) is G4 motif. The segment at 351–356 (TTAVDT) is G5 motif.

The protein belongs to the G-alpha family. G(s) subfamily. G proteins are composed of 3 units; alpha, beta and gamma. The alpha chain contains the guanine nucleotide binding site.

Its function is as follows. Guanine nucleotide-binding proteins (G proteins) are involved as modulators or transducers in various transmembrane signaling systems. The G(s) protein is involved in hormonal regulation of adenylate cyclase: it activates the cyclase in response to beta-adrenergic stimuli. The sequence is that of Guanine nucleotide-binding protein G(s) subunit alpha from Geodia cydonium (Sponge).